The primary structure comprises 202 residues: uncharacterized protein (202 aa).

The START domain maps to 1–202 (MRGILRMTVL…KGLRSAAEKR (202 aa)).

Functionally, may play a role in the interaction of the bacterium with animal cells. This is an uncharacterized protein from Pseudomonas aeruginosa (strain ATCC 15692 / DSM 22644 / CIP 104116 / JCM 14847 / LMG 12228 / 1C / PRS 101 / PAO1).